We begin with the raw amino-acid sequence, 404 residues long: Propionate kinase (404 aa).

Belongs to the acetokinase family. PduW subfamily.

Its subcellular location is the cytoplasm. It catalyses the reaction propanoate + ATP = propanoyl phosphate + ADP. Its pathway is polyol metabolism; 1,2-propanediol degradation. Its function is as follows. Works with phosphate acetyltransferase (pta) to capture exogenous propionate and regenerate propionyl-CoA during degradation of 1,2-propanediol (1,2-PD). The chain is Propionate kinase from Escherichia fergusonii (strain ATCC 35469 / DSM 13698 / CCUG 18766 / IAM 14443 / JCM 21226 / LMG 7866 / NBRC 102419 / NCTC 12128 / CDC 0568-73).